The primary structure comprises 439 residues: Enolase (439 aa).

Q163 lines the (2R)-2-phosphoglycerate pocket. E205 (proton donor) is an active-site residue. Mg(2+) contacts are provided by D242, E287, and D314. 4 residues coordinate (2R)-2-phosphoglycerate: K339, R368, S369, and K390. K339 serves as the catalytic Proton acceptor.

This sequence belongs to the enolase family. Requires Mg(2+) as cofactor.

The protein resides in the cytoplasm. It localises to the secreted. Its subcellular location is the cell surface. The enzyme catalyses (2R)-2-phosphoglycerate = phosphoenolpyruvate + H2O. Its pathway is carbohydrate degradation; glycolysis; pyruvate from D-glyceraldehyde 3-phosphate: step 4/5. In terms of biological role, catalyzes the reversible conversion of 2-phosphoglycerate (2-PG) into phosphoenolpyruvate (PEP). It is essential for the degradation of carbohydrates via glycolysis. The polypeptide is Enolase (Levilactobacillus brevis (strain ATCC 367 / BCRC 12310 / CIP 105137 / JCM 1170 / LMG 11437 / NCIMB 947 / NCTC 947) (Lactobacillus brevis)).